The primary structure comprises 147 residues: Large ribosomal subunit protein bL9 (147 aa).

The protein belongs to the bacterial ribosomal protein bL9 family.

Its function is as follows. Binds to the 23S rRNA. This is Large ribosomal subunit protein bL9 from Trichlorobacter lovleyi (strain ATCC BAA-1151 / DSM 17278 / SZ) (Geobacter lovleyi).